A 180-amino-acid polypeptide reads, in one-letter code: Oligoribonuclease (180 aa).

Residues 7-170 form the Exonuclease domain; that stretch reads LIWIDLEMTG…DDIRESIAEL (164 aa). Residue Tyr-128 is part of the active site.

Belongs to the oligoribonuclease family.

The protein localises to the cytoplasm. In terms of biological role, 3'-to-5' exoribonuclease specific for small oligoribonucleotides. In Pseudomonas putida (strain ATCC 700007 / DSM 6899 / JCM 31910 / BCRC 17059 / LMG 24140 / F1), this protein is Oligoribonuclease.